Consider the following 162-residue polypeptide: Succinate dehydrogenase assembly factor 2-A, mitochondrial (162 aa).

The N-terminal 23 residues, 1 to 23 (MLRQLRLTMDISGWIFLPWRRSM), are a transit peptide targeting the mitochondrion.

It belongs to the SDHAF2 family. Interacts with the flavoprotein subunit within the SDH catalytic dimer.

The protein resides in the mitochondrion matrix. In terms of biological role, plays an essential role in the assembly of succinate dehydrogenase (SDH), an enzyme complex (also referred to as respiratory complex II) that is a component of both the tricarboxylic acid (TCA) cycle and the mitochondrial electron transport chain, and which couples the oxidation of succinate to fumarate with the reduction of ubiquinone (coenzyme Q) to ubiquinol. Required for flavinylation (covalent attachment of FAD) of the flavoprotein subunit of the SDH catalytic dimer. The sequence is that of Succinate dehydrogenase assembly factor 2-A, mitochondrial from Drosophila erecta (Fruit fly).